Reading from the N-terminus, the 116-residue chain is Large ribosomal subunit protein bL17 (116 aa).

It belongs to the bacterial ribosomal protein bL17 family. As to quaternary structure, part of the 50S ribosomal subunit. Contacts protein L32.

The chain is Large ribosomal subunit protein bL17 from Synechococcus sp. (strain JA-2-3B'a(2-13)) (Cyanobacteria bacterium Yellowstone B-Prime).